A 316-amino-acid chain; its full sequence is Protoheme IX farnesyltransferase (316 aa).

The next 9 membrane-spanning stretches (helical) occupy residues 28-48, 50-70, 99-119, 122-142, 150-170, 178-198, 223-243, 244-264, and 293-313; these read IIPL…KGQV, PLLL…AQTL, HALI…VFFV, LSGF…THLL, IVIG…AVTG, ILFA…ALMI, IWLY…PLAA, CGVV…KKAW, and AMVI…ASLF.

It belongs to the UbiA prenyltransferase family. Protoheme IX farnesyltransferase subfamily.

It localises to the cell inner membrane. It catalyses the reaction heme b + (2E,6E)-farnesyl diphosphate + H2O = Fe(II)-heme o + diphosphate. It participates in porphyrin-containing compound metabolism; heme O biosynthesis; heme O from protoheme: step 1/1. Converts heme B (protoheme IX) to heme O by substitution of the vinyl group on carbon 2 of heme B porphyrin ring with a hydroxyethyl farnesyl side group. The sequence is that of Protoheme IX farnesyltransferase from Microcystis aeruginosa (strain NIES-843 / IAM M-2473).